Reading from the N-terminus, the 443-residue chain is GTPase Der (443 aa).

EngA-type G domains follow at residues 3–167 (PTLV…PEPE) and 176–349 (VRVA…AAAM). GTP is bound by residues 9–16 (GRPNVGKS), 56–60 (DTGGF), 119–122 (NKAE), 182–189 (GRPNVGKS), 229–233 (DTAGM), and 294–297 (NKWD). Residues 350 to 434 (AKMTTPRLTR…PLRIQFVTAK (85 aa)) form the KH-like domain.

This sequence belongs to the TRAFAC class TrmE-Era-EngA-EngB-Septin-like GTPase superfamily. EngA (Der) GTPase family. Associates with the 50S ribosomal subunit.

In terms of biological role, GTPase that plays an essential role in the late steps of ribosome biogenesis. This Dechloromonas aromatica (strain RCB) protein is GTPase Der.